A 363-amino-acid chain; its full sequence is Pyrimidine monooxygenase RutA (363 aa).

FMN is bound by residues 49 to 50 (IK), Asn115, Glu124, 140 to 141 (RY), and Ser190.

It belongs to the NtaA/SnaA/DszA monooxygenase family. RutA subfamily.

It carries out the reaction uracil + FMNH2 + NADH + O2 = (Z)-3-ureidoacrylate + FMN + NAD(+) + H2O + H(+). It catalyses the reaction thymine + FMNH2 + NADH + O2 = (Z)-2-methylureidoacrylate + FMN + NAD(+) + H2O + H(+). Catalyzes the pyrimidine ring opening between N-3 and C-4 by an unusual flavin hydroperoxide-catalyzed mechanism, adding oxygen atoms in the process to yield ureidoacrylate peracid, that immediately reacts with FMN forming ureidoacrylate and FMN-N(5)-oxide. The FMN-N(5)-oxide reacts spontaneously with NADH to produce FMN. Requires the flavin reductase RutF to regenerate FMN in vivo. The polypeptide is Pyrimidine monooxygenase RutA (Escherichia coli O103:H2 (strain 12009 / EHEC)).